We begin with the raw amino-acid sequence, 341 residues long: Syntaxin-122 (341 aa).

M1 is subject to N-acetylmethionine. Disordered regions lie at residues 1–22 and 111–137; these read MNDL…PPHS and LDRA…RTSV. Topologically, residues 1-284 are cytoplasmic; the sequence is MNDLLSGSFK…ARFYQKNTRK (284 aa). Polar residues-rich tracts occupy residues 8–21 and 126–137; these read SFKT…SPPH and PGSSSDRQRTSV. Residues 64-185 are a coiled coil; that stretch reads CHNLRSSNEQ…GEYPDEATLE (122 aa). In terms of domain architecture, t-SNARE coiled-coil homology spans 213–275; it reads INEIQERHDA…RSGADRLVKA (63 aa). The chain crosses the membrane as a helical; Anchor for type IV membrane protein span at residues 285-305; it reads WTCFAILLLLIIVVLIVVFTV. Residues 306 to 341 lie on the Vesicular side of the membrane; that stretch reads KPWESNGGGGGGAPRQATPVQAQPPPPPAVNRRLLR. The tract at residues 312–341 is disordered; it reads GGGGGGAPRQATPVQAQPPPPPAVNRRLLR.

The protein belongs to the syntaxin family. In terms of assembly, part of the t-SNARE complex.

It is found in the membrane. Functionally, vesicle trafficking protein that functions in the secretory pathway. The sequence is that of Syntaxin-122 (SYP122) from Arabidopsis thaliana (Mouse-ear cress).